An 869-amino-acid polypeptide reads, in one-letter code: Leucine--tRNA ligase (869 aa).

The 'HIGH' region signature appears at 51–61; that stretch reads PYPSGRIHMGH. A 'KMSKS' region motif is present at residues 636–640; it reads KMSKS. ATP is bound at residue K639.

The protein belongs to the class-I aminoacyl-tRNA synthetase family.

Its subcellular location is the cytoplasm. The enzyme catalyses tRNA(Leu) + L-leucine + ATP = L-leucyl-tRNA(Leu) + AMP + diphosphate. The sequence is that of Leucine--tRNA ligase from Dinoroseobacter shibae (strain DSM 16493 / NCIMB 14021 / DFL 12).